The following is a 210-amino-acid chain: Phosphate propanoyltransferase (210 aa).

26–28 contacts CoA; that stretch reads VSN. 2 residues coordinate Zn(2+): His-30 and His-32. 2 residues coordinate CoA: Lys-71 and Arg-78. Position 84 (Arg-84) interacts with phosphate. Zn(2+)-binding residues include Glu-90, His-138, His-140, and His-186. Residue Asn-193 participates in CoA binding.

Belongs to the PduL family. As to quaternary structure, monomer, when purified in the absence of the encapsulation peptide (EP, residues 1-27). The EP may influence oligomerization. Zn(2+) is required as a cofactor.

The protein resides in the bacterial microcompartment. It catalyses the reaction propanoyl-CoA + phosphate = propanoyl phosphate + CoA. It functions in the pathway polyol metabolism; 1,2-propanediol degradation. Involved in 1,2-propanediol (1,2-PD) utilization in the bacterial microcompartment (BMC) dedicated to 1,2-PD degradation by catalyzing the conversion of propanoyl-CoA to propanoyl-phosphate. Also able to catalyze the reverse reaction. Also has phosphate acetyltransferase activity to a lesser extent. Required for optimal growth on 1,2-PD when the BMC is intact. CoA is regenerated within the BMC (for use by PduP) via this enzyme, although there must also be cofactor transport across the BMC. Directly targeted to the BMC. Functionally, the 1,2-PD-specific bacterial microcompartment (BMC) concentrates low levels of 1,2-PD catabolic enzymes, concentrates volatile reaction intermediates thus enhancing pathway flux and keeps the level of toxic, mutagenic propionaldehyde low. The sequence is that of Phosphate propanoyltransferase from Salmonella typhimurium (strain LT2 / SGSC1412 / ATCC 700720).